The chain runs to 156 residues: ATP synthase subunit b (156 aa).

A helical transmembrane segment spans residues 3-23 (ITLTIFAQALAFAGLIWIVAT).

It belongs to the ATPase B chain family. As to quaternary structure, F-type ATPases have 2 components, F(1) - the catalytic core - and F(0) - the membrane proton channel. F(1) has five subunits: alpha(3), beta(3), gamma(1), delta(1), epsilon(1). F(0) has three main subunits: a(1), b(2) and c(10-14). The alpha and beta chains form an alternating ring which encloses part of the gamma chain. F(1) is attached to F(0) by a central stalk formed by the gamma and epsilon chains, while a peripheral stalk is formed by the delta and b chains.

It localises to the cell inner membrane. In terms of biological role, f(1)F(0) ATP synthase produces ATP from ADP in the presence of a proton or sodium gradient. F-type ATPases consist of two structural domains, F(1) containing the extramembraneous catalytic core and F(0) containing the membrane proton channel, linked together by a central stalk and a peripheral stalk. During catalysis, ATP synthesis in the catalytic domain of F(1) is coupled via a rotary mechanism of the central stalk subunits to proton translocation. Component of the F(0) channel, it forms part of the peripheral stalk, linking F(1) to F(0). The sequence is that of ATP synthase subunit b from Xanthomonas campestris pv. campestris (strain 8004).